The chain runs to 263 residues: Chymotrypsinogen 2 (263 aa).

The N-terminal stretch at 1–18 (MAFLWLLSCFALLGTAFG) is a signal peptide. Intrachain disulfides connect cysteine 19–cysteine 140, cysteine 60–cysteine 76, cysteine 154–cysteine 219, cysteine 186–cysteine 200, and cysteine 209–cysteine 238. The 228-residue stretch at 34 to 261 (IVNGEDAVPG…LIPWVQQILQ (228 aa)) folds into the Peptidase S1 domain. Histidine 75 functions as the Charge relay system in the catalytic mechanism. Residue serine 93 is modified to Phosphoserine. The active-site Charge relay system is aspartate 120. Residue serine 213 is the Charge relay system of the active site.

This sequence belongs to the peptidase S1 family.

The protein localises to the secreted. It localises to the extracellular space. It carries out the reaction Preferential cleavage: Tyr-|-Xaa, Trp-|-Xaa, Phe-|-Xaa, Leu-|-Xaa.. The protein is Chymotrypsinogen 2 (CTRB1) of Canis lupus familiaris (Dog).